The chain runs to 379 residues: MSATLALTEQLIARASVTPDDQHCQQLMIERLAALGFECETIASHGVTNFWAVKRGTAGRAGKLLAFAGHTDVVPTGPLEQWRSPPFVPTHRDGKLYGRGAADMKTSLAGFVVAAEEFVAAHPQHRGSIGFLITSDEEGPATDGTVKVVEALAARGERLDYCIVGEPTSTATLGDVVKNGRRGSMSGELVVKGVQGHIAYPHLAKNPIHLLAPALAELAAEQWDEGNEYFPPTTWQVSNLRAGTGATNVIPGHADLLFNFRFSTASTVEGLQARVHAILDRHGLDYTLNWSVSGLPFLTPRGELSNALDAAIRAETGVSPELSTTGGTSDGRFIARICPQVIEFGPPNASIHKIDEHIDVRFVDPLKNVYRRVLEQLIA.

Zn(2+) is bound at residue H70. Residue D72 is part of the active site. D103 is a binding site for Zn(2+). The active-site Proton acceptor is the E137. Residues E138, E166, and H352 each contribute to the Zn(2+) site.

This sequence belongs to the peptidase M20A family. DapE subfamily. As to quaternary structure, homodimer. The cofactor is Zn(2+). Co(2+) serves as cofactor.

It catalyses the reaction N-succinyl-(2S,6S)-2,6-diaminopimelate + H2O = (2S,6S)-2,6-diaminopimelate + succinate. The protein operates within amino-acid biosynthesis; L-lysine biosynthesis via DAP pathway; LL-2,6-diaminopimelate from (S)-tetrahydrodipicolinate (succinylase route): step 3/3. In terms of biological role, catalyzes the hydrolysis of N-succinyl-L,L-diaminopimelic acid (SDAP), forming succinate and LL-2,6-diaminopimelate (DAP), an intermediate involved in the bacterial biosynthesis of lysine and meso-diaminopimelic acid, an essential component of bacterial cell walls. This chain is Succinyl-diaminopimelate desuccinylase, found in Burkholderia mallei (strain NCTC 10247).